Reading from the N-terminus, the 575-residue chain is Estrogen receptor beta (575 aa).

Residues 1–160 (MSSSLSPTLQ…GAVVKRDMHF (160 aa)) form a modulating region. The segment at 108–151 (DTKPHTSGRHSSFLSRPKLFGKRPEDGDGDEALDDDDPSSSSSG) is disordered. A compositionally biased stretch (acidic residues) spans 134–145 (GDGDEALDDDDP). 2 NR C4-type zinc fingers span residues 161 to 181 (CVVCHDYASGYHYGVWSCEGC) and 197 to 221 (CPATNQCTIDKNRRKSCQACRLRKC). Positions 161–226 (CVVCHDYASG…RLRKCYEMGM (66 aa)) form a DNA-binding region, nuclear receptor. The NR LBD domain maps to 290–526 (SPEQLVYCIL…DLLLEMLDAN (237 aa)). The span at 537–549 (VCTDPVTPATSPN) shows a compositional bias: polar residues. Residues 537 to 557 (VCTDPVTPATSPNTPLPPQLH) are disordered.

This sequence belongs to the nuclear hormone receptor family. NR3 subfamily. As to quaternary structure, binds DNA as a homodimer. Can form a heterodimer with ER-alpha. In terms of tissue distribution, ovary and testis.

It is found in the nucleus. Functionally, binds estrogens with an affinity similar to that of ER-alpha, and activates expression of reporter genes containing estrogen response elements (ERE) in an estrogen-dependent manner. This is Estrogen receptor beta (esr2) from Ictalurus punctatus (Channel catfish).